A 305-amino-acid chain; its full sequence is Ribonuclease BN (305 aa).

Residues H64, H66, D68, H69, H141, D212, and H270 each coordinate Zn(2+). Residue D68 is the Proton acceptor of the active site.

This sequence belongs to the RNase Z family. RNase BN subfamily. In terms of assembly, homodimer. Requires Zn(2+) as cofactor.

Functionally, zinc phosphodiesterase, which has both exoribonuclease and endoribonuclease activities. In Shigella flexneri, this protein is Ribonuclease BN.